The following is a 268-amino-acid chain: Phosphatidylglycerol--prolipoprotein diacylglyceryl transferase (268 aa).

4 helical membrane-spanning segments follow: residues 23 to 43 (WYALAYLAGFVLGWRYCLALA), 58 to 78 (FLTWAVVGVILGGRIGYVLFY), 96 to 116 (GGMSFHGGLIGVLGAILLFCW), and 119 to 139 (GLSPLAFGDLIAAAAPIGLFF). R141 provides a ligand contact to a 1,2-diacyl-sn-glycero-3-phospho-(1'-sn-glycerol). The next 3 membrane-spanning stretches (helical) occupy residues 181–201 (SFLEGAVLFVLLAILVRMPAV), 206–226 (GMTAGIFFIGYGLSRIIAEFF), and 238–258 (AGATMGQLLSVPMVLFGVWLV).

It belongs to the Lgt family.

Its subcellular location is the cell inner membrane. The enzyme catalyses L-cysteinyl-[prolipoprotein] + a 1,2-diacyl-sn-glycero-3-phospho-(1'-sn-glycerol) = an S-1,2-diacyl-sn-glyceryl-L-cysteinyl-[prolipoprotein] + sn-glycerol 1-phosphate + H(+). It functions in the pathway protein modification; lipoprotein biosynthesis (diacylglyceryl transfer). In terms of biological role, catalyzes the transfer of the diacylglyceryl group from phosphatidylglycerol to the sulfhydryl group of the N-terminal cysteine of a prolipoprotein, the first step in the formation of mature lipoproteins. This is Phosphatidylglycerol--prolipoprotein diacylglyceryl transferase from Azospirillum brasilense.